Consider the following 101-residue polypeptide: Integration host factor subunit beta (101 aa).

It belongs to the bacterial histone-like protein family. As to quaternary structure, heterodimer of an alpha and a beta chain.

In terms of biological role, this protein is one of the two subunits of integration host factor, a specific DNA-binding protein that functions in genetic recombination as well as in transcriptional and translational control. The polypeptide is Integration host factor subunit beta (Nitrobacter hamburgensis (strain DSM 10229 / NCIMB 13809 / X14)).